A 483-amino-acid chain; its full sequence is Aspartyl/glutamyl-tRNA(Asn/Gln) amidotransferase subunit B (483 aa).

It belongs to the GatB/GatE family. GatB subfamily. Heterotrimer of A, B and C subunits.

It catalyses the reaction L-glutamyl-tRNA(Gln) + L-glutamine + ATP + H2O = L-glutaminyl-tRNA(Gln) + L-glutamate + ADP + phosphate + H(+). The catalysed reaction is L-aspartyl-tRNA(Asn) + L-glutamine + ATP + H2O = L-asparaginyl-tRNA(Asn) + L-glutamate + ADP + phosphate + 2 H(+). Its function is as follows. Allows the formation of correctly charged Asn-tRNA(Asn) or Gln-tRNA(Gln) through the transamidation of misacylated Asp-tRNA(Asn) or Glu-tRNA(Gln) in organisms which lack either or both of asparaginyl-tRNA or glutaminyl-tRNA synthetases. The reaction takes place in the presence of glutamine and ATP through an activated phospho-Asp-tRNA(Asn) or phospho-Glu-tRNA(Gln). In Anaplasma phagocytophilum (strain HZ), this protein is Aspartyl/glutamyl-tRNA(Asn/Gln) amidotransferase subunit B.